The primary structure comprises 439 residues: Protein translocase subunit SecY (439 aa).

10 consecutive transmembrane segments (helical) span residues 28–48 (ILIT…PVPG), 73–93 (IFSG…LPYI), 127–147 (LTRY…AVWV), 156–176 (PLFT…VMWI), 179–199 (LITE…NIVA), 220–240 (VGGI…IVFV), 276–296 (GVMP…LANF), 318–338 (IYAL…SSLI), 375–395 (LTIL…AVEG), and 401–421 (TFQG…IDTA).

The protein belongs to the SecY/SEC61-alpha family. Component of the Sec protein translocase complex. Heterotrimer consisting of SecY, SecE and SecG subunits. The heterotrimers can form oligomers, although 1 heterotrimer is thought to be able to translocate proteins. Interacts with the ribosome. Interacts with SecDF, and other proteins may be involved. Interacts with SecA.

It is found in the cell inner membrane. The protein resides in the cellular thylakoid membrane. Functionally, the central subunit of the protein translocation channel SecYEG. Consists of two halves formed by TMs 1-5 and 6-10. These two domains form a lateral gate at the front which open onto the bilayer between TMs 2 and 7, and are clamped together by SecE at the back. The channel is closed by both a pore ring composed of hydrophobic SecY resides and a short helix (helix 2A) on the extracellular side of the membrane which forms a plug. The plug probably moves laterally to allow the channel to open. The ring and the pore may move independently. The sequence is that of Protein translocase subunit SecY from Synechococcus elongatus (strain ATCC 33912 / PCC 7942 / FACHB-805) (Anacystis nidulans R2).